A 156-amino-acid polypeptide reads, in one-letter code: Cyanate hydratase (156 aa).

Catalysis depends on residues arginine 96, glutamate 99, and serine 122.

The protein belongs to the cyanase family.

The catalysed reaction is cyanate + hydrogencarbonate + 3 H(+) = NH4(+) + 2 CO2. Its function is as follows. Catalyzes the reaction of cyanate with bicarbonate to produce ammonia and carbon dioxide. In Mycobacteroides abscessus (strain ATCC 19977 / DSM 44196 / CCUG 20993 / CIP 104536 / JCM 13569 / NCTC 13031 / TMC 1543 / L948) (Mycobacterium abscessus), this protein is Cyanate hydratase.